Reading from the N-terminus, the 178-residue chain is Cytidylate kinase (178 aa).

7 to 15 (GLPGTGTTT) serves as a coordination point for ATP.

It belongs to the cytidylate kinase family. Type 2 subfamily.

It localises to the cytoplasm. The enzyme catalyses CMP + ATP = CDP + ADP. It carries out the reaction dCMP + ATP = dCDP + ADP. The sequence is that of Cytidylate kinase from Methanococcus maripaludis (strain C7 / ATCC BAA-1331).